We begin with the raw amino-acid sequence, 174 residues long: Gamma-crystallin M3 (174 aa).

Beta/gamma crystallin 'Greek key' domains are found at residues 2–40 (GKIIFYEDRNFQGRSYECSSDCSDMSTYLSRCHSCRVES) and 41–82 (GCFV…RMVP). The connecting peptide stretch occupies residues 83 to 87 (QYRGP). Beta/gamma crystallin 'Greek key' domains follow at residues 88 to 128 (YRMR…HVMD) and 129 to 171 (GHWL…RRIM).

The protein belongs to the beta/gamma-crystallin family. In terms of assembly, monomer.

In terms of biological role, crystallins are the dominant structural components of the vertebrate eye lens. The sequence is that of Gamma-crystallin M3 from Cyprinus carpio (Common carp).